Here is a 244-residue protein sequence, read N- to C-terminus: Chalcone--flavanone isomerase (244 aa).

Substrate-binding residues include Thr-57, Asn-122, and Ser-199.

It belongs to the chalcone isomerase family.

The catalysed reaction is a chalcone = a flavanone.. It functions in the pathway secondary metabolite biosynthesis; flavonoid biosynthesis. Catalyzes the intramolecular cyclization of bicyclic chalcones into tricyclic (S)-flavanones. Responsible for the isomerization of 4,2',4',6'-tetrahydroxychalcone (also termed chalcone) into naringenin. The sequence is that of Chalcone--flavanone isomerase (CHI) from Arabidopsis lyrata subsp. petraea (Northern rock-cress).